Consider the following 221-residue polypeptide: GTP-binding nuclear protein Ran-2 (221 aa).

A Small GTPase Ran-type domain is found at 10–174 (DYPSFKLVIV…LYLARKLAGD (165 aa)). A GTP-binding site is contributed by 21 to 28 (DGGTGKTT). The switch-I stretch occupies residues 40–48 (KKYEPTIGV). GTP is bound by residues Gly-71, 125 to 128 (NKVD), and 153 to 155 (SAK). The interval 71–87 (GQEKFGGLRDGYYIHGQ) is switch-II. Positions 202–212 (ADLAAAAAQPL) are enriched in low complexity. The tract at residues 202-221 (ADLAAAAAQPLPDDDDDAFE) is disordered.

The protein belongs to the small GTPase superfamily. Ran family. In terms of assembly, found in a nuclear export complex with RanGTP, exportin and pre-miRNA. Interacts with RanBP1a and RanBP1b. Interacts with PHRIP1. Interacts with KPNB1. Binds to PHIP1.

The protein localises to the nucleus. It localises to the nucleus envelope. In terms of biological role, GTP-binding protein involved in nucleocytoplasmic transport. Required for the import of protein into the nucleus and also for RNA export. Involved in chromatin condensation and control of cell cycle. The chain is GTP-binding nuclear protein Ran-2 from Arabidopsis thaliana (Mouse-ear cress).